We begin with the raw amino-acid sequence, 140 residues long: Nucleoside diphosphate kinase (140 aa).

6 residues coordinate ATP: K11, F59, R87, T93, R104, and N114. Catalysis depends on H117, which acts as the Pros-phosphohistidine intermediate.

This sequence belongs to the NDK family. Homotetramer. Mg(2+) serves as cofactor.

It is found in the cytoplasm. It catalyses the reaction a 2'-deoxyribonucleoside 5'-diphosphate + ATP = a 2'-deoxyribonucleoside 5'-triphosphate + ADP. The enzyme catalyses a ribonucleoside 5'-diphosphate + ATP = a ribonucleoside 5'-triphosphate + ADP. In terms of biological role, major role in the synthesis of nucleoside triphosphates other than ATP. The ATP gamma phosphate is transferred to the NDP beta phosphate via a ping-pong mechanism, using a phosphorylated active-site intermediate. This Rhizobium etli (strain ATCC 51251 / DSM 11541 / JCM 21823 / NBRC 15573 / CFN 42) protein is Nucleoside diphosphate kinase.